Consider the following 488-residue polypeptide: 3-octaprenyl-4-hydroxybenzoate carboxy-lyase (488 aa).

Mn(2+) is bound at residue N172. Prenylated FMN is bound by residues 175–177, 189–191, and 194–195; these read IYR, RWL, and RG. E238 serves as a coordination point for Mn(2+). Catalysis depends on D287, which acts as the Proton donor.

Belongs to the UbiD family. Homohexamer. It depends on prenylated FMN as a cofactor. The cofactor is Mn(2+).

It localises to the cell membrane. It carries out the reaction a 4-hydroxy-3-(all-trans-polyprenyl)benzoate + H(+) = a 2-(all-trans-polyprenyl)phenol + CO2. It participates in cofactor biosynthesis; ubiquinone biosynthesis. Functionally, catalyzes the decarboxylation of 3-octaprenyl-4-hydroxy benzoate to 2-octaprenylphenol, an intermediate step in ubiquinone biosynthesis. The protein is 3-octaprenyl-4-hydroxybenzoate carboxy-lyase of Legionella pneumophila (strain Lens).